We begin with the raw amino-acid sequence, 532 residues long: 2,3-bisphosphoglycerate-independent phosphoglycerate mutase (532 aa).

Positions 15 and 65 each coordinate Mn(2+). Ser-65 acts as the Phosphoserine intermediate in catalysis. Residues His-126, 156–157 (RD), Arg-188, Arg-194, 258–261 (RPDR), and Lys-331 contribute to the substrate site. The Mn(2+) site is built by Asp-398, His-402, Asp-439, His-440, and His-457.

It belongs to the BPG-independent phosphoglycerate mutase family. Monomer. It depends on Mn(2+) as a cofactor.

The catalysed reaction is (2R)-2-phosphoglycerate = (2R)-3-phosphoglycerate. The protein operates within carbohydrate degradation; glycolysis; pyruvate from D-glyceraldehyde 3-phosphate: step 3/5. In terms of biological role, catalyzes the interconversion of 2-phosphoglycerate and 3-phosphoglycerate. In Rippkaea orientalis (strain PCC 8801 / RF-1) (Cyanothece sp. (strain PCC 8801)), this protein is 2,3-bisphosphoglycerate-independent phosphoglycerate mutase.